Consider the following 173-residue polypeptide: Small ribosomal subunit protein uS9 (173 aa).

Residues 20-53 (SYTTESEVPVEGEYTSESVASRFGEPQPAAGLGR) are disordered.

The protein belongs to the universal ribosomal protein uS9 family.

The protein is Small ribosomal subunit protein uS9 of Streptomyces avermitilis (strain ATCC 31267 / DSM 46492 / JCM 5070 / NBRC 14893 / NCIMB 12804 / NRRL 8165 / MA-4680).